The chain runs to 417 residues: D-amino acid dehydrogenase (417 aa).

3-17 contributes to the FAD binding site; sequence VIVIGSGVIGLTSAW.

The protein belongs to the DadA oxidoreductase family. Requires FAD as cofactor.

The enzyme catalyses a D-alpha-amino acid + A + H2O = a 2-oxocarboxylate + AH2 + NH4(+). It functions in the pathway amino-acid degradation; D-alanine degradation; NH(3) and pyruvate from D-alanine: step 1/1. Functionally, oxidative deamination of D-amino acids. This Vibrio atlanticus (strain LGP32) (Vibrio splendidus (strain Mel32)) protein is D-amino acid dehydrogenase.